Consider the following 496-residue polypeptide: Cytochrome P450 71B1 (496 aa).

Cys436 contacts heme.

Belongs to the cytochrome P450 family. Requires heme as cofactor.

This is Cytochrome P450 71B1 (CYP71B1) from Thlaspi arvense (Field penny-cress).